The following is a 332-amino-acid chain: Aspartate carbamoyltransferase catalytic subunit (332 aa).

Residues R54 and T55 each coordinate carbamoyl phosphate. Position 82 (K82) interacts with L-aspartate. The carbamoyl phosphate site is built by R104, H134, and Q137. 2 residues coordinate L-aspartate: R175 and R230. Carbamoyl phosphate contacts are provided by G271 and P272. A disordered region spans residues 312–332; it reads GGPDGDSTTSPGSGPEGGTTP.

Belongs to the aspartate/ornithine carbamoyltransferase superfamily. ATCase family. As to quaternary structure, heterododecamer (2C3:3R2) of six catalytic PyrB chains organized as two trimers (C3), and six regulatory PyrI chains organized as three dimers (R2).

It carries out the reaction carbamoyl phosphate + L-aspartate = N-carbamoyl-L-aspartate + phosphate + H(+). Its pathway is pyrimidine metabolism; UMP biosynthesis via de novo pathway; (S)-dihydroorotate from bicarbonate: step 2/3. Catalyzes the condensation of carbamoyl phosphate and aspartate to form carbamoyl aspartate and inorganic phosphate, the committed step in the de novo pyrimidine nucleotide biosynthesis pathway. The protein is Aspartate carbamoyltransferase catalytic subunit of Beutenbergia cavernae (strain ATCC BAA-8 / DSM 12333 / CCUG 43141 / JCM 11478 / NBRC 16432 / NCIMB 13614 / HKI 0122).